The sequence spans 399 residues: S-adenosylmethionine synthase (399 aa).

ATP is bound at residue His-16. Residue Asp-18 participates in Mg(2+) binding. Glu-44 lines the K(+) pocket. 2 residues coordinate L-methionine: Glu-57 and Gln-100. Residues 100–110 (QSSDIAQGVNE) are flexible loop. ATP is bound by residues 177 to 179 (DAK), 244 to 245 (RF), Asp-253, 259 to 260 (RK), Ala-276, and Lys-280. Asp-253 contributes to the L-methionine binding site. An L-methionine-binding site is contributed by Lys-284.

It belongs to the AdoMet synthase family. Homotetramer; dimer of dimers. Requires Mg(2+) as cofactor. The cofactor is K(+).

It is found in the cytoplasm. It carries out the reaction L-methionine + ATP + H2O = S-adenosyl-L-methionine + phosphate + diphosphate. It functions in the pathway amino-acid biosynthesis; S-adenosyl-L-methionine biosynthesis; S-adenosyl-L-methionine from L-methionine: step 1/1. In terms of biological role, catalyzes the formation of S-adenosylmethionine (AdoMet) from methionine and ATP. The overall synthetic reaction is composed of two sequential steps, AdoMet formation and the subsequent tripolyphosphate hydrolysis which occurs prior to release of AdoMet from the enzyme. In Lactococcus lactis subsp. lactis (strain IL1403) (Streptococcus lactis), this protein is S-adenosylmethionine synthase.